Here is a 68-residue protein sequence, read N- to C-terminus: Protein SlyX homolog (68 aa).

This sequence belongs to the SlyX family.

This chain is Protein SlyX homolog, found in Brucella abortus (strain S19).